Reading from the N-terminus, the 331-residue chain is Adenine deaminase (331 aa).

His-17, His-19, and His-197 together coordinate Zn(2+). The Proton donor role is filled by Glu-200. Asp-278 contributes to the Zn(2+) binding site. A substrate-binding site is contributed by Asp-279.

This sequence belongs to the metallo-dependent hydrolases superfamily. Adenosine and AMP deaminases family. Adenine deaminase type 2 subfamily. The cofactor is Zn(2+).

It catalyses the reaction adenine + H2O + H(+) = hypoxanthine + NH4(+). Functionally, catalyzes the hydrolytic deamination of adenine to hypoxanthine. Plays an important role in the purine salvage pathway and in nitrogen catabolism. The chain is Adenine deaminase from Wolinella succinogenes (strain ATCC 29543 / DSM 1740 / CCUG 13145 / JCM 31913 / LMG 7466 / NCTC 11488 / FDC 602W) (Vibrio succinogenes).